Here is a 150-residue protein sequence, read N- to C-terminus: C-C motif chemokine 25 (150 aa).

An N-terminal signal peptide occupies residues methionine 1–threonine 23. Disulfide bonds link cysteine 30–cysteine 58 and cysteine 31–cysteine 75.

This sequence belongs to the intercrine beta (chemokine CC) family. In terms of tissue distribution, specifically expressed by thymic dendritic cells. High levels in thymus and small intestine.

It localises to the secreted. Functionally, potentially involved in T-cell development. Recombinant protein shows chemotactic activity on thymocytes, macrophages, THP-1 cells, and dendritics cells but is inactive on peripheral blood lymphocytes and neutrophils. Binds to CCR9. Isoform 2 is an antagonist of isoform 1. Binds to atypical chemokine receptor ACKR4 and mediates the recruitment of beta-arrestin (ARRB1/2) to ACKR4. The chain is C-C motif chemokine 25 (CCL25) from Homo sapiens (Human).